The chain runs to 30 residues: Nattererin-2 (30 aa).

Expressed by the skin glands.

Its subcellular location is the secreted. In terms of biological role, probably has antibacterial activity. The chain is Nattererin-2 from Physalaemus nattereri (Cuyaba dwarf frog).